Here is a 446-residue protein sequence, read N- to C-terminus: Deoxyguanosinetriphosphate triphosphohydrolase-like protein (446 aa).

The tract at residues 1–28 (MSSSVWQERRHGEDKQRRNDHRSPFQRD) is disordered. Over residues 7–28 (QERRHGEDKQRRNDHRSPFQRD) the composition is skewed to basic and acidic residues. The HD domain occupies 59–252 (RLTHSLEVSQ…MELADDIAYA (194 aa)).

The protein belongs to the dGTPase family. Type 2 subfamily.

The chain is Deoxyguanosinetriphosphate triphosphohydrolase-like protein from Shewanella sp. (strain ANA-3).